The sequence spans 248 residues: MAGHSQFKNIMHRKGRQDAQKSKLFSKLAREITVAAKLGTPDPAMNPRLRAAVIAARAENMPKDNIERAIKKASGNDAESYDELRYEGYGPGGVAVIMEVLTDNRNRAASDIRSYFTKSGGNLGETGSVSFMFDRLGVIEYDADKASVDDMLEAAIEAGADDVVSDEGGHEIYASQDTFRDVAKALESTFGEARKVALIWKPQNTIAVDDNTGEKLLKLIDLLNEHDDVQNVYANFEVSDALIAKLGG.

The tract at residues 1-21 (MAGHSQFKNIMHRKGRQDAQK) is disordered.

Belongs to the TACO1 family.

Its subcellular location is the cytoplasm. In Nitrobacter winogradskyi (strain ATCC 25391 / DSM 10237 / CIP 104748 / NCIMB 11846 / Nb-255), this protein is Probable transcriptional regulatory protein Nwi_2729.